The sequence spans 459 residues: Anthocyanidin 3-O-glucoside 2''-O-glucosyltransferase (459 aa).

The active-site Proton acceptor is His20. His20 is a binding site for an anthocyanidin. Asp117 (charge relay) is an active-site residue. 7 residues coordinate UDP-alpha-D-glucose: Thr138, Val335, Gln337, His352, Trp355, Ser357, and Glu360. An anthocyanidin is bound at residue Gly375. The UDP-alpha-D-glucose site is built by Asp376 and Gln377.

It belongs to the UDP-glycosyltransferase family.

The catalysed reaction is an anthocyanidin 3-O-beta-D-glucoside + UDP-alpha-D-glucose = an anthocyanidin 3-O-sophoroside + UDP + 2 H(+). The protein operates within pigment biosynthesis; anthocyanin biosynthesis. In terms of biological role, glycosyltransferase that mediates the glucosylation of anthocyanidin 3-O-glucosides to yield anthocyanidin 3-O-sophorosides. 3-O-sophoroside derivatives are required for the color of flowers. The protein is Anthocyanidin 3-O-glucoside 2''-O-glucosyltransferase (3GGT) of Ipomoea purpurea (Common morning glory).